Reading from the N-terminus, the 691-residue chain is L-type lectin-domain containing receptor kinase S.6 (691 aa).

The N-terminal stretch at 1 to 25 is a signal peptide; it reads MNHHHYSLVIFHLILFLSLDFPTLS. The Extracellular portion of the chain corresponds to 26–311; sequence HRFSPPLQNL…VVGLKIPVWS (286 aa). The interval 27–257 is legume-lectin like; that stretch reads RFSPPLQNLT…LHIVERWKFR (231 aa). N-linked (GlcNAc...) asparagine glycans are attached at residues Asn-34 and Asn-89. The chain crosses the membrane as a helical span at residues 312-332; sequence LLPGLAAIVILVAFIVFSLIC. Over 333–691 the chain is Cytoplasmic; that stretch reads GKKRISEEAD…PWMTPKSHFS (359 aa). Residues 366 to 653 form the Protein kinase domain; the sequence is FNENAIVGQG…IRGEAPLPVL (288 aa). ATP is bound by residues 372-380 and Lys-394; that span reads VGQGASATV. The active-site Proton acceptor is the Asp-500.

This sequence in the C-terminal section; belongs to the protein kinase superfamily. Ser/Thr protein kinase family. The protein in the N-terminal section; belongs to the leguminous lectin family.

The protein resides in the cell membrane. The catalysed reaction is L-seryl-[protein] + ATP = O-phospho-L-seryl-[protein] + ADP + H(+). It catalyses the reaction L-threonyl-[protein] + ATP = O-phospho-L-threonyl-[protein] + ADP + H(+). Its function is as follows. Involved in resistance response to the pathogenic oomycetes Phytophthora infestans and Phytophthora capsici and to the pathogenic bacteria Pseudomonas syringae. This chain is L-type lectin-domain containing receptor kinase S.6, found in Arabidopsis thaliana (Mouse-ear cress).